The primary structure comprises 321 residues: Mas-related G-protein coupled receptor member B4 (321 aa).

Residues 1–33 (MGTTTLAWNINNTAENGSYTEMFSCITKFNTLN) are Extracellular-facing. N-linked (GlcNAc...) asparagine glycosylation is found at Asn11 and Asn16. The chain crosses the membrane as a helical span at residues 34–54 (FLTVIIAVVGLAGNGIVLWLL). Residues 55–62 (AFHLHRNA) lie on the Cytoplasmic side of the membrane. The helical transmembrane segment at 63-83 (FSVYVLNLAGADFLYLFTQVV) threads the bilayer. Residues 84 to 97 (HSLECVLQLDNNSF) lie on the Extracellular side of the membrane. N-linked (GlcNAc...) asparagine glycosylation occurs at Asn94. Residues 98-118 (YILLIVTMFAYLAGLCMIAAI) form a helical membrane-spanning segment. At 119–146 (SAERCLSVMWPIWYHCQRPRHTSAIMCA) the chain is on the cytoplasmic side. Residues 147 to 167 (LVWVSSLLLSLVVGLGCGFLF) traverse the membrane as a helical segment. Residues 168 to 172 (SYYDY) lie on the Extracellular side of the membrane. A helical transmembrane segment spans residues 173-193 (YFCITLNFITAAFLIVLSVVL). The Cytoplasmic portion of the chain corresponds to 194-215 (SVSSLALLVKIVWGSHRIPVTR). The helical transmembrane segment at 216 to 236 (FFVTIALTVVVFIYFGMPFGI) threads the bilayer. The Extracellular segment spans residues 237-257 (CWFLLSRIMEFDSIFFNNVYE). The chain crosses the membrane as a helical span at residues 258-278 (IIEFLSCVNSCANPIIYFLVG). The Cytoplasmic portion of the chain corresponds to 279-321 (SIRQHRLRWQSLKLLLQRAMQDTPEEESGERGPSQRSGELETV). A disordered region spans residues 299 to 321 (QDTPEEESGERGPSQRSGELETV).

This sequence belongs to the G-protein coupled receptor 1 family. Mas subfamily.

The protein resides in the membrane. In terms of biological role, orphan receptor. Probably involved in the function of nociceptive neurons. May regulate nociceptor function and/or development, including the sensation or modulation of pain. The polypeptide is Mas-related G-protein coupled receptor member B4 (Mrgprb4) (Mus musculus (Mouse)).